A 92-amino-acid polypeptide reads, in one-letter code: Envelope glycoprotein J (92 aa).

Residues 1–21 (MSLRAVWHLGLLGSLVGAVLA) form the signal peptide. The Extracellular segment spans residues 22–49 (ATHRGPAANTTDPLTHAPVSPHPSPLGG). Residue N30 is glycosylated (N-linked (GlcNAc...) asparagine; by host). A helical transmembrane segment spans residues 50 to 70 (FAVPLVVGGLCAVVLGAACLL). Residues 71-92 (ELLRRTCRGWGRYHPYMDPVVV) lie on the Cytoplasmic side of the membrane.

This sequence belongs to the alphaherpesvirinae glycoprotein J family.

It localises to the host Golgi apparatus membrane. The protein localises to the host endoplasmic reticulum membrane. It is found in the host endosome membrane. In terms of biological role, inhibits host cell apoptosis. Induces an increase in reactive oxygen species (ROS) in the host cell. The chain is Envelope glycoprotein J (gJ) from Homo sapiens (Human).